The chain runs to 441 residues: NADH-quinone oxidoreductase subunit D 1 (441 aa).

This sequence belongs to the complex I 49 kDa subunit family. In terms of assembly, NDH-1 is composed of 14 different subunits. Subunits NuoB, C, D, E, F, and G constitute the peripheral sector of the complex.

It localises to the cell membrane. The catalysed reaction is a quinone + NADH + 5 H(+)(in) = a quinol + NAD(+) + 4 H(+)(out). Functionally, NDH-1 shuttles electrons from NADH, via FMN and iron-sulfur (Fe-S) centers, to quinones in the respiratory chain. The immediate electron acceptor for the enzyme in this species is believed to be a menaquinone. Couples the redox reaction to proton translocation (for every two electrons transferred, four hydrogen ions are translocated across the cytoplasmic membrane), and thus conserves the redox energy in a proton gradient. This chain is NADH-quinone oxidoreductase subunit D 1, found in Salinispora arenicola (strain CNS-205).